We begin with the raw amino-acid sequence, 70 residues long: Translation initiation factor IF-1 (70 aa).

An S1-like domain is found at 1–70; that stretch reads MKETNLSIKG…LTKGRIIYRH (70 aa).

This sequence belongs to the IF-1 family. As to quaternary structure, component of the 30S ribosomal translation pre-initiation complex which assembles on the 30S ribosome in the order IF-2 and IF-3, IF-1 and N-formylmethionyl-tRNA(fMet); mRNA recruitment can occur at any time during PIC assembly.

It localises to the cytoplasm. Its function is as follows. One of the essential components for the initiation of protein synthesis. Stabilizes the binding of IF-2 and IF-3 on the 30S subunit to which N-formylmethionyl-tRNA(fMet) subsequently binds. Helps modulate mRNA selection, yielding the 30S pre-initiation complex (PIC). Upon addition of the 50S ribosomal subunit IF-1, IF-2 and IF-3 are released leaving the mature 70S translation initiation complex. This chain is Translation initiation factor IF-1, found in Mycoplasmoides gallisepticum (strain R(low / passage 15 / clone 2)) (Mycoplasma gallisepticum).